The following is a 603-amino-acid chain: Translation initiation factor IF-2 (603 aa).

Residues 112–279 (TRPPIITIMG…NINLQAEILD (168 aa)) enclose the tr-type G domain. Positions 121–128 (GHVDHGKT) are G1. A GTP-binding site is contributed by 121–128 (GHVDHGKT). Positions 146–150 (GITQH) are G2. Positions 167–170 (DTPG) are G3. GTP contacts are provided by residues 167–171 (DTPGH) and 221–224 (NKMD). Residues 221–224 (NKMD) are G4. The G5 stretch occupies residues 257–259 (SAL).

It belongs to the TRAFAC class translation factor GTPase superfamily. Classic translation factor GTPase family. IF-2 subfamily.

It localises to the cytoplasm. In terms of biological role, one of the essential components for the initiation of protein synthesis. Protects formylmethionyl-tRNA from spontaneous hydrolysis and promotes its binding to the 30S ribosomal subunits. Also involved in the hydrolysis of GTP during the formation of the 70S ribosomal complex. This chain is Translation initiation factor IF-2, found in Mycoplasmopsis pulmonis (strain UAB CTIP) (Mycoplasma pulmonis).